The following is a 318-amino-acid chain: Replication factor C small subunit (318 aa).

An ATP-binding site is contributed by 43-50 (GPAGTGKT).

It belongs to the activator 1 small subunits family. RfcS subfamily. As to quaternary structure, heteromultimer composed of small subunits (RfcS) and large subunits (RfcL).

Its function is as follows. Part of the RFC clamp loader complex which loads the PCNA sliding clamp onto DNA. This is Replication factor C small subunit from Picrophilus torridus (strain ATCC 700027 / DSM 9790 / JCM 10055 / NBRC 100828 / KAW 2/3).